Here is a 293-residue protein sequence, read N- to C-terminus: Acetylglutamate kinase (293 aa).

Residues 60–61 (GG), Arg-82, and Asn-188 contribute to the substrate site.

Belongs to the acetylglutamate kinase family. ArgB subfamily.

It localises to the cytoplasm. The enzyme catalyses N-acetyl-L-glutamate + ATP = N-acetyl-L-glutamyl 5-phosphate + ADP. It participates in amino-acid biosynthesis; L-arginine biosynthesis; N(2)-acetyl-L-ornithine from L-glutamate: step 2/4. Its function is as follows. Catalyzes the ATP-dependent phosphorylation of N-acetyl-L-glutamate. In Methanothermobacter thermautotrophicus (strain ATCC 29096 / DSM 1053 / JCM 10044 / NBRC 100330 / Delta H) (Methanobacterium thermoautotrophicum), this protein is Acetylglutamate kinase.